The chain runs to 534 residues: C-type lectin domain family 18 member A (534 aa).

The disordered stretch occupies residues 47–88 (GALPVAGKPEPMARSLASAPVSPWHHMDRGSTTPAKARSHSA). The region spanning 139–270 (LTAHNRLRSR…EAMEAFVCAY (132 aa)) is the SCP domain. In terms of domain architecture, EGF-like spans 316–349 (PRNPCRMSCRNLGHLNISTCRCHCQPGYTGRYCQ). Disulfide bonds link C324–C337, C339–C348, C415–C520, and C496–C512. Residues 394–521 (IDGDCFMVSP…CKTRNRYICQ (128 aa)) enclose the C-type lectin domain.

The protein resides in the secreted. This chain is C-type lectin domain family 18 member A (Clec18a), found in Mus musculus (Mouse).